A 318-amino-acid chain; its full sequence is MLHHHCRRNPELQEELQIQAAVAAGDVHTVRKMLEQGYSPNGRDANGWTLLHFSAARGKERCVRVFLEHGADPTVKDLIGGFTALHYAAMHGRARIARLMLESEYRSDIINAKSNDGWTPLHVAAHYGRDSFVRLLLEFKAEVDPLSDKGTTPLQLAIIRERSSCVKILLDHNANIDIQNGFLLRYAVIKSNHSYCRMFLQRGADTDLGRLEDGQTPLHLSALRDDVLCARMLYNYGADTNTRNYEGQTPLAVSISISGSSRPCLDFLQEVTRQPRNLQDLCRIKIRQCIGLQNLKLLDELPIAKVMKDYLKHKFDDI.

ANK repeat units follow at residues 13 to 42 (QEEL…SPNG), 46 to 75 (NGWT…DPTV), 80 to 109 (GGFT…RSDI), 116 to 145 (DGWT…EVDP), 149 to 178 (KGTT…NIDI), 180 to 208 (NGFL…DTDL), and 213 to 242 (DGQT…DTNT). One can recognise an SOCS box domain in the interval 265–318 (LDFLQEVTRQPRNLQDLCRIKIRQCIGLQNLKLLDELPIAKVMKDYLKHKFDDI).

It belongs to the ankyrin SOCS box (ASB) family. As to quaternary structure, interacts with CUL5. Interacts with RNF7. Interacts with PSRC1.

The protein operates within protein modification; protein ubiquitination. Its function is as follows. Probable substrate-recognition component of a SCF-like ECS (Elongin-Cullin-SOCS-box protein) E3 ubiquitin-protein ligase complex which mediates the ubiquitination and subsequent proteasomal degradation of target proteins. Plays a role in spindle dynamics and genome integrity by targeting the mitotic progression protein PSRC1 for proteasomal degradation in a cell cycle-dependent manner. Also participates in meiosis by mediating the proper attachment between kinetochores and microtubules. In Macaca fascicularis (Crab-eating macaque), this protein is Ankyrin repeat and SOCS box protein 7 (ASB7).